A 67-amino-acid chain; its full sequence is Epsilon-conotoxin TxVA (67 aa).

A signal peptide spans 1–19 (MRCFPVFIILLLLIASAPC). A propeptide spanning residues 20–50 (FDARTKTDDDVPLSSLRDNLKRTIRTRLNIR) is cleaved from the precursor. Residues E51 and E54 each carry the 4-carboxyglutamate modification. 2 disulfides stabilise this stretch: C52/C58 and C53/C59. W57 is subject to 6'-bromotryptophan. O-linked (GalNAc...) threonine glycosylation occurs at T60. 4-hydroxyproline is present on P63. The propeptide occupies 64–67 (LTGR).

In terms of processing, O-glycan consists of the disaccharide Gal-GalNAc. In terms of tissue distribution, expressed by the venom duct.

The protein localises to the secreted. Functionally, epsilon-conotoxins act at presynaptic membranes, blocking the calcium channels or G protein-coupled receptors. Causes hyperactivity upon intracranial injection into mice. Causes dorsal fins drooping in fish. This chain is Epsilon-conotoxin TxVA, found in Conus textile (Cloth-of-gold cone).